Here is a 157-residue protein sequence, read N- to C-terminus: Beta-defensin 125 (157 aa).

Residues 1–20 form the signal peptide; sequence MNILMLTFIICGLLTQVTKG. Disulfide bonds link Cys-27–Cys-55, Cys-35–Cys-49, and Cys-39–Cys-56. The interval 109–157 is disordered; that stretch reads GETMTPETNTPETTMPPPETTTPETTMPPSETATSETMPPPSQRALTHN. Low complexity-rich tracts occupy residues 110-121 and 129-145; these read ETMTPETNTPET and TTPE…TSET.

It belongs to the beta-defensin family.

It is found in the secreted. Its function is as follows. Has antibacterial activity. The sequence is that of Beta-defensin 125 (DEFB125) from Pan troglodytes (Chimpanzee).